A 421-amino-acid chain; its full sequence is MDLENKVKKMGLGHEQGFGAPCLKCKEKCEGFELHFWRKICRNCKCGQEEHDVLLSNEEDRKVGKLFEDTKYTTLIAKLKSDGIPMYKRNVMILTNPVAAKKNVSINTVTYEWAPPVQNQALARQYMQMLPKEKQPVAGSEGAQYRKKQLAKQLPAHDQDPSKCHELSPREVKEMEQFVKKYKSEALGVGDVKLPCEMDAQGPKQMNIPGGDRSTPAAVGAMEDKSAEHKRTQYSCYCCKLSMKEGDPAIYAERAGYDKLWHPACFVCSTCHELLVDMIYFWKNEKLYCGRHYCDSEKPRCAGCDELIFSNEYTQAENQNWHLKHFCCFDCDSILAGEIYVMVNDKPVCKPCYVKNHAVVCQGCHNAIDPEVQRVTYNNFSWHASTECFLCSCCSKCLIGQKFMPVEGMVFCSVECKKMMS.

A PET domain is found at 92–199 (MILTNPVAAK…GDVKLPCEMD (108 aa)). Residues 133–164 (EKQPVAGSEGAQYRKKQLAKQLPAHDQDPSKC) form a disordered region. Over residues 155–164 (PAHDQDPSKC) the composition is skewed to basic and acidic residues. LIM zinc-binding domains are found at residues 234 to 297 (YSCY…CDSE), 299 to 359 (PRCA…NHAV), and 362 to 421 (QGCH…KMMS).

This sequence belongs to the prickle / espinas / testin family. Interacts via LIM domain 1 with ZYX. Interacts (via LIM domain 3) with ENAH and VASP. Interacts with ALKBH4, talin, actin, alpha-actinin, GRIP1 and PXN. Interacts (via LIM domain 2) with ACTL7A (via N-terminus). Heterodimer with ACTL7A; the heterodimer interacts with ENAH to form a heterotrimer.

The protein resides in the cytoplasm. It is found in the cell junction. It localises to the focal adhesion. In terms of biological role, scaffold protein that may play a role in cell adhesion, cell spreading and in the reorganization of the actin cytoskeleton. Plays a role in the regulation of cell proliferation. May act as a tumor suppressor. The chain is Testin (TES) from Colobus guereza (Mantled guereza).